Consider the following 735-residue polypeptide: Catalase-peroxidase (735 aa).

Positions 95-223 form a cross-link, tryptophyl-tyrosyl-methioninium (Trp-Tyr) (with M-249); sequence WHSAGTYRTG…LAAVQMGLIY (129 aa). Residue histidine 96 is the Proton acceptor of the active site. The tryptophyl-tyrosyl-methioninium (Tyr-Met) (with W-95) cross-link spans 223 to 249; sequence YVNPEGPDGVPDPIKSGIDIRETFARM. Histidine 264 is a heme b binding site.

It belongs to the peroxidase family. Peroxidase/catalase subfamily. In terms of assembly, homodimer or homotetramer. It depends on heme b as a cofactor. In terms of processing, formation of the three residue Trp-Tyr-Met cross-link is important for the catalase, but not the peroxidase activity of the enzyme.

It catalyses the reaction H2O2 + AH2 = A + 2 H2O. It carries out the reaction 2 H2O2 = O2 + 2 H2O. Its function is as follows. Bifunctional enzyme with both catalase and broad-spectrum peroxidase activity. The sequence is that of Catalase-peroxidase from Aliarcobacter butzleri (strain RM4018) (Arcobacter butzleri).